We begin with the raw amino-acid sequence, 163 residues long: SKP1-like protein 4 (163 aa).

The interaction with the F-box domain of F-box proteins stretch occupies residues 105–163; that stretch reads ILAANYLNIGGLLDLTCKAVADQMRGKTPEQMRAHFNIKNDYTPEEEAEVRNENKWAFE.

Belongs to the SKP1 family. In terms of assembly, part of a SCF (SKP1-cullin-F-box) protein ligase complex. Interacts with At1g56610, At1g67340, At3g62230, At3g59000, At4g27050, At1g55000, SKIP16 and SKIP32. In terms of tissue distribution, mostly expressed in inflorescence and siliques, and, to a lower extent, in seedlings, roots, and stems.

It localises to the nucleus. Its pathway is protein modification; protein ubiquitination. Functionally, involved in ubiquitination and subsequent proteasomal degradation of target proteins. Together with CUL1, RBX1 and a F-box protein, it forms a SCF E3 ubiquitin ligase complex. The functional specificity of this complex depends on the type of F-box protein. In the SCF complex, it serves as an adapter that links the F-box protein to CUL1. In Arabidopsis thaliana (Mouse-ear cress), this protein is SKP1-like protein 4 (ASK4).